We begin with the raw amino-acid sequence, 64 residues long: Epidermal growth factor (64 aa).

The N-terminal stretch at 1–21 is a signal peptide; sequence MMRHLLLVGAAILIFVSDAQA. A Pyrrolidone carboxylic acid modification is found at Q22. Residues 25-61 enclose the EGF-like domain; sequence GEDPCQIVRCSYGANCIAYGDTAICECPFGYSGIRCQ. Cystine bridges form between C29–C40, C34–C49, and C51–C60.

As to expression, albumen gland. Up-regulated in adult CNS after axotomy.

Its subcellular location is the secreted. Functionally, induces neurite outgrowth in specific adult neurons in vitro. In Lymnaea stagnalis (Great pond snail), this protein is Epidermal growth factor.